The chain runs to 636 residues: Bifunctional phosphonoacetaldehyde hydrolase/aminoethylphosphonate transaminase (636 aa).

A phosphonoacetaldehyde hydrolase region spans residues 1–276; that stretch reads MKKIYGEKIK…IKSDFVPEND (276 aa). Asp-15 functions as the Nucleophile in the catalytic mechanism. Mg(2+) contacts are provided by Asp-15 and Ala-17. The active-site Schiff-base intermediate with substrate is the Lys-56. Asp-189 contributes to the Mg(2+) binding site. Residues 277-636 form a 2-aminoethylphosphonate--pyruvate transaminase region; that stretch reads YILLTPGPLS…ADVIEKFINR (360 aa). N6-(pyridoxal phosphate)lysine is present on Lys-465.

The protein in the N-terminal section; belongs to the HAD-like hydrolase superfamily. PhnX family. In the C-terminal section; belongs to the class-V pyridoxal-phosphate-dependent aminotransferase family. PhnW subfamily. As to quaternary structure, homodimer. Mg(2+) is required as a cofactor. It depends on pyridoxal 5'-phosphate as a cofactor.

It catalyses the reaction (2-aminoethyl)phosphonate + pyruvate = phosphonoacetaldehyde + L-alanine. It carries out the reaction phosphonoacetaldehyde + H2O = acetaldehyde + phosphate + H(+). Its function is as follows. Involved in phosphonate degradation. The sequence is that of Bifunctional phosphonoacetaldehyde hydrolase/aminoethylphosphonate transaminase (phnXW) from Clostridioides difficile (strain 630) (Peptoclostridium difficile).